Reading from the N-terminus, the 454-residue chain is Transcription factor efuD (454 aa).

One can recognise an HTH TFE/IIEalpha-type domain in the interval 4 to 111 (AKELIRITAR…NYHRAIDSIK (108 aa)). The segment at 327–454 (LRTDDDGAMD…DEDELEFEDI (128 aa)) is disordered. The segment covering 353–372 (DQDEEEEEEDDDDDEFEDVD) has biased composition (acidic residues). The segment covering 387 to 401 (SVSTPATSAQVSSTA) has biased composition (polar residues). The span at 423–437 (APAAAASSQAAAAES) shows a compositional bias: low complexity. The span at 442 to 454 (SDEDEDELEFEDI) shows a compositional bias: acidic residues.

The protein belongs to the TFIIE alpha subunit family.

It localises to the nucleus. Transcription factor; part of the gene cluster that mediates the biosynthesis of enfumafungin, a glycosylated fernene-type triterpenoid with potent antifungal activity, mediated by its interaction with beta-1,3-glucan synthase and the fungal cell wall. Is possibly responsible for the transcription regulation of one or more genes within the gene cluster. This is Transcription factor efuD from Hormonema carpetanum.